Reading from the N-terminus, the 416-residue chain is Multifunctional CCA protein (416 aa).

G8 and R11 together coordinate ATP. CTP contacts are provided by G8 and R11. Residues D21 and D23 each coordinate Mg(2+). ATP is bound by residues R91, R138, and R141. CTP-binding residues include R91, R138, and R141. Residues 229–331 (TGLHQELVSD…YELLQRCDAF (103 aa)) enclose the HD domain.

This sequence belongs to the tRNA nucleotidyltransferase/poly(A) polymerase family. Bacterial CCA-adding enzyme type 1 subfamily. As to quaternary structure, monomer. Can also form homodimers and oligomers. It depends on Mg(2+) as a cofactor. Ni(2+) is required as a cofactor.

It catalyses the reaction a tRNA precursor + 2 CTP + ATP = a tRNA with a 3' CCA end + 3 diphosphate. The enzyme catalyses a tRNA with a 3' CCA end + 2 CTP + ATP = a tRNA with a 3' CCACCA end + 3 diphosphate. Catalyzes the addition and repair of the essential 3'-terminal CCA sequence in tRNAs without using a nucleic acid template. Adds these three nucleotides in the order of C, C, and A to the tRNA nucleotide-73, using CTP and ATP as substrates and producing inorganic pyrophosphate. tRNA 3'-terminal CCA addition is required both for tRNA processing and repair. Also involved in tRNA surveillance by mediating tandem CCA addition to generate a CCACCA at the 3' terminus of unstable tRNAs. While stable tRNAs receive only 3'-terminal CCA, unstable tRNAs are marked with CCACCA and rapidly degraded. The protein is Multifunctional CCA protein of Xylella fastidiosa (strain M12).